Reading from the N-terminus, the 1077-residue chain is FKBP12-associated protein 1 homolog (1077 aa).

Positions 1-173 (METSKNPSDL…MPKNSKEIKK (173 aa)) are disordered. Basic residues predominate over residues 15 to 29 (ANVKKNRRRFQKSQK). A Phosphoserine modification is found at S33. The segment covering 52 to 64 (EEVKTSLKEDSSK) has biased composition (basic and acidic residues). The span at 76–87 (PTSSVQLNVSKN) shows a compositional bias: polar residues. A compositionally biased stretch (basic and acidic residues) spans 100-116 (SSKDEELRKHAKGEGKR). Low complexity predominate over residues 136-149 (SSNSSQETSSSKGS). Residues 153–173 (KSERSREAKSRMPKNSKEIKK) show a composition bias toward basic and acidic residues. The RING-type; atypical zinc-finger motif lies at 197–247 (CSVCTDTINPSTSIWSCGTCYHVFHLSCIRKWCKNSIEQRNEDAWRCPYCQ). NF-X1-type zinc fingers lie at residues 290–308 (CEHPCPLLCHPGPCPPCTA), 348–367 (CGEHTCKKRCHSGLCGACFE), 420–441 (CGLHKCSKTCHPISETRAHCPF), 485–503 (CGHRCKYKCHLGSCGTCSE), 541–558 (CGRHQCNKKCCSGYSKAQ), 595–614 (CGNHFCQHMCHRGPCPRCLE), 708–729 (CKTHFCEKLCHPDGECESSCKK), and 738–760 (CEHVCQSPCHAGHPCDERIPCKA). Residues 835 to 897 (SDFADEVESL…KRNVMVYNKG (63 aa)) enclose the R3H domain.

The protein belongs to the NFX1 family.

The protein resides in the cytoplasm. Its subcellular location is the golgi apparatus. It localises to the nucleus. May play a role in transcription regulation. This is FKBP12-associated protein 1 homolog (fap1) from Schizosaccharomyces pombe (strain 972 / ATCC 24843) (Fission yeast).